Consider the following 337-residue polypeptide: uncharacterized protein (337 aa).

The protein belongs to the NAD(P)-dependent epimerase/dehydratase family.

This is an uncharacterized protein from Escherichia coli (strain K12).